A 1532-amino-acid polypeptide reads, in one-letter code: Multidrug resistance-associated protein 1 (1532 aa).

Residues 1–33 are Extracellular-facing; sequence MALSSFCSSDGSDPLWDWNVTWHTSNPDFTKCF. Asn19 carries an N-linked (GlcNAc...) asparagine glycan. A helical membrane pass occupies residues 34–54; the sequence is QNTVLTWVPCFYLWSCFPLYF. Residues 55–74 are Cytoplasmic-facing; that stretch reads LYLSRHDRGYIQMTHLNKAK. A helical transmembrane segment spans residues 75 to 95; that stretch reads TALGFFLWIICWADLFYSFWE. Residues 96-100 are Extracellular-facing; it reads RSQGM. Residues 101–121 form a helical membrane-spanning segment; sequence LLAPVLLVSPTLLGITMLLAT. The Cytoplasmic portion of the chain corresponds to 122–133; the sequence is FLIQFERRKGVQ. The chain crosses the membrane as a helical span at residues 134-154; it reads SSGIMLTFWLVALLCALAILR. Over 155–172 the chain is Extracellular; sequence SKIISALKKDAQVDMFRD. A helical membrane pass occupies residues 173 to 193; that stretch reads SAFYLYFTLVFIQLVLSCFSD. Residues 194–317 are Cytoplasmic-facing; it reads SSPLFSETVR…KDRDPSLFKV (124 aa). The residue at position 277 (Tyr277) is a Phosphotyrosine. A Phosphoserine modification is found at Ser290. Residues 318–338 traverse the membrane as a helical segment; it reads LYKTFGPYFLMSFLYKALHDL. In terms of domain architecture, ABC transmembrane type-1 1 spans 326 to 609; that stretch reads FLMSFLYKAL…LPMVISSIVQ (284 aa). The Extracellular segment spans residues 339–364; that stretch reads MMFAGPEILELIINFVNDREAPDWQG. Residues 365–385 form a helical membrane-spanning segment; it reads YLYTALLFVSACLQTLALHQY. Residues 386 to 441 are Cytoplasmic-facing; sequence FHICFVTGMRIKTAVVGAVYRKALVITNSARKSSTVGEIVNLMSVDAQRFMDLATY. A helical membrane pass occupies residues 442–462; the sequence is INMIWSAPLQVTLALYFLWLN. Topologically, residues 463–465 are extracellular; the sequence is LGP. Residues 466–486 form a helical membrane-spanning segment; it reads SVLAGVAVMILMVPFNAVMAM. Residues 487–548 lie on the Cytoplasmic side of the membrane; it reads KTKTYQVAHM…VLKKSAYLAA (62 aa). Lys504 carries the post-translational modification N6-succinyllysine. Residues 549 to 569 form a helical membrane-spanning segment; that stretch reads VGTFTWVCTPFLVALSTFAVF. Residues 570–591 are Extracellular-facing; sequence VTVDEKNILDAKKAFVSLALFN. A helical transmembrane segment spans residues 592–612; the sequence is ILRFPLNILPMVISSIVQASV. Topologically, residues 613–967 are cytoplasmic; that stretch reads SLKRLRIFLS…VKLSVYWNYM (355 aa). An ABC transporter 1 domain is found at 645–869; sequence ITVKNATFTW…DGAFAEFVRT (225 aa). 679–686 contacts ATP; sequence GQVGCGKS. A phosphoserine mark is found at Ser879, Ser883, Ser916, and Ser931. The helical transmembrane segment at 968-988 threads the bilayer; that stretch reads KAIGLCISFLSIFLFLCNHVS. One can recognise an ABC transmembrane type-1 2 domain in the interval 975-1257; the sequence is SFLSIFLFLC…LVRMSSEMET (283 aa). Topologically, residues 989-1026 are extracellular; it reads ALASNYWLSLWTDDRPAVNGTQENRNFRLSVYGALGIL. Residues 1027 to 1047 form a helical membrane-spanning segment; sequence QGVAVFGYSMAVSIGGIFASR. Over 1048–1090 the chain is Cytoplasmic; sequence RLHLDLLQNVLRSPMSFFERTPSGNLVNRFSKELDTVDSMIPQ. Residues 1091–1111 traverse the membrane as a helical segment; that stretch reads VIKMFMGSLFSVIGAVIIILL. Ala1112 is a topological domain (extracellular). Residues 1113–1133 form a helical membrane-spanning segment; that stretch reads TPIAAVIIPPLGLVYFFVQRF. Residues 1134–1204 are Cytoplasmic-facing; it reads YVASSRQLKR…VANRWLAVRL (71 aa). The helical transmembrane segment at 1205–1225 threads the bilayer; the sequence is ECVGNCIVLFAALFAVISRHS. The Extracellular portion of the chain corresponds to 1226 to 1227; that stretch reads LS. The chain crosses the membrane as a helical span at residues 1228 to 1248; it reads AGLVGLSVSYSLQITAYLNWL. The Cytoplasmic segment spans residues 1249-1532; it reads VRMSSEMETN…YSMAKDAGLV (284 aa). Positions 1294-1528 constitute an ABC transporter 2 domain; the sequence is VEFRDYCLRY…RGVFYSMAKD (235 aa). Position 1328–1335 (1328–1335) interacts with ATP; sequence GRTGAGKS.

Belongs to the ABC transporter superfamily. ABCC family. Conjugate transporter (TC 3.A.1.208) subfamily. Glycosylated. As to expression, skeletal muscle, brain, heart, spleen, lung and kidney.

The protein resides in the cell membrane. It is found in the basolateral cell membrane. The catalysed reaction is ATP + H2O + xenobioticSide 1 = ADP + phosphate + xenobioticSide 2.. It carries out the reaction an S-substituted glutathione(in) + ATP + H2O = an S-substituted glutathione(out) + ADP + phosphate + H(+). It catalyses the reaction sphing-4-enine 1-phosphate(in) + ATP + H2O = sphing-4-enine 1-phosphate(out) + ADP + phosphate + H(+). The enzyme catalyses leukotriene C4(in) + ATP + H2O = leukotriene C4(out) + ADP + phosphate + H(+). The catalysed reaction is 17beta-estradiol 17-O-(beta-D-glucuronate)(in) + ATP + H2O = 17beta-estradiol 17-O-(beta-D-glucuronate)(out) + ADP + phosphate + H(+). It carries out the reaction daunorubicin(in) + ATP + H2O = daunorubicin(out) + ADP + phosphate + H(+). It catalyses the reaction vincristine(in) + ATP + H2O = vincristine(out) + ADP + phosphate + H(+). The enzyme catalyses 2',3'-cGAMP(in) + ATP + H2O = 2',3'-cGAMP(out) + ADP + phosphate + H(+). The catalysed reaction is S-[(2E,6E,10E)-geranylgeranyl]-L-glutathione(in) + ATP + H2O = S-[(2E,6E,10E)-geranylgeranyl]-L-glutathione(out) + ADP + phosphate + H(+). It carries out the reaction prostaglandin A2-S-(R)-glutathione(in) + ATP + H2O = prostaglandin A2-S-(R)-glutathione(out) + ADP + phosphate + H(+). It catalyses the reaction prostaglandin A2-S-(S)-glutathione(in) + ATP + H2O = prostaglandin A2-S-(S)-glutathione(out) + ADP + phosphate + H(+). With respect to regulation, MK 571 inhibits sphingosine 1-phosphate and leukotriene C4 export. In terms of biological role, mediates export of organic anions and drugs from the cytoplasm. Mediates ATP-dependent transport of glutathione and glutathione conjugates, leukotriene C4, estradiol-17-beta-o-glucuronide, methotrexate, antiviral drugs and other xenobiotics. Confers resistance to anticancer drugs by decreasing accumulation of drug in cells, and by mediating ATP- and GSH-dependent drug export. Hydrolyzes ATP with low efficiency. Catalyzes the export of sphingosine 1-phosphate from mast cells independently of their degranulation. Participates in inflammatory response by allowing export of leukotriene C4 from leukotriene C4-synthesizing cells. Exports S-geranylgeranyl-glutathione (GGG) in lymphoid cells and stromal compartments of lymphoid organs. ABCC1 (via extracellular transport) with GGT5 (via GGG catabolism) establish GGG gradients within lymphoid tissues to position P2RY8-positive lymphocytes at germinal centers in lymphoid follicles and restrict their chemotactic transmigration from blood vessels to the bone marrow parenchyma. Mediates basolateral export of GSH-conjugated R- and S-prostaglandin A2 diastereomers in polarized epithelial cells. The sequence is that of Multidrug resistance-associated protein 1 from Rattus norvegicus (Rat).